A 526-amino-acid polypeptide reads, in one-letter code: Reelin domain-containing protein 1 (526 aa).

A signal peptide spans 1–23 (MRMQAALVGWACTTLCLASCSSA). Residues 24 to 179 (FSHGASTVAC…SAHSDDRMEP (156 aa)) form the Reelin domain. Residues 24-443 (FSHGASTVAC…PLGIQLRTPQ (420 aa)) are Extracellular-facing. 3 disordered regions span residues 242 to 272 (DAET…PTLE), 294 to 336 (FASS…TVTQ), and 370 to 398 (LQTS…LPQS). Over residues 245–271 (TLSQPSSHTATEGSINQQPSGDSNPTL) the composition is skewed to polar residues. A compositionally biased stretch (polar residues) spans 385–396 (SEASRASASFLP). Residues 444–462 (LGILLCLSATLGMALAAGL) traverse the membrane as a helical segment. Topologically, residues 463–526 (RYLHTQYCHQ…PSVGSKKTVL (64 aa)) are cytoplasmic.

It is found in the membrane. In Homo sapiens (Human), this protein is Reelin domain-containing protein 1.